We begin with the raw amino-acid sequence, 500 residues long: MSYFPWLTILVVLPIFAGSLIFFLPHKGNKIVRWYTIAICLLEFLIMTYAFCYHFQLEDPLIQLKEDSKWIDVFDFHWRLGIDGLSLGSILLTGFITTLATLAAWPVTRNSQLFYFLMLAMYSGQIGLFSSRDLLLFFIMWELELIPVYLLLSMWGGKRRLYSATKFILYTAGGSIFFLIGVLGMGLYGSNEPGLDLERLINQSYPTTLEILLYFGFLIAYAVKLPIIPLHTWLPDTHGEAHYSTCMLLAGILLKMGAYGLIRVNMELLPHAHYLFSPWLVIIGAVQIIYAALTSLGQRNFKKRIAYSSVSHMGFIIIGIGSITNIGLNGAILQILSHGFIGATLFFLAGTACDRMRLVYLEELGGISIPMPKIFTMFSSFSMASLALPGMSGFVAELVVFFGLITSPKFMLMPKMLITFVMAIGMILTPIYLLSMLRQMFYGYKLFHVPNKNFVDSGPRELFLLICIFLPVIGIGIYPDFVLSLSVDRVEVLLSNYYTK.

14 helical membrane passes run 4–24 (FPWL…IFFL), 35–55 (YTIA…CYHF), 87–107 (LGSI…AWPV), 111–131 (SQLF…LFSS), 134–154 (LLLF…LLSM), 167–187 (FILY…GMGL), 211–231 (ILLY…IPLH), 242–262 (HYST…YGLI), 274–294 (YLFS…AALT), 313–333 (MGFI…GAIL), 334–354 (QILS…TACD), 386–406 (LALP…GLIT), 417–437 (LITF…LSML), and 462–482 (LFLL…PDFV).

It belongs to the complex I subunit 4 family.

The protein localises to the plastid. The protein resides in the chloroplast thylakoid membrane. It carries out the reaction a plastoquinone + NADH + (n+1) H(+)(in) = a plastoquinol + NAD(+) + n H(+)(out). The catalysed reaction is a plastoquinone + NADPH + (n+1) H(+)(in) = a plastoquinol + NADP(+) + n H(+)(out). The chain is NAD(P)H-quinone oxidoreductase chain 4, chloroplastic from Saccharum hybrid (Sugarcane).